Consider the following 116-residue polypeptide: MQTRYGRRALTIWPLLLLAIAAEVAATSLLPQTNGFRKLKPTVAVACLYTVAFALLAQILKFTDIGIAYALWAGLGTASVAVIGVLFRNERFSWKHAIGLALVVTGVVTLNLQAGQ.

Transmembrane regions (helical) follow at residues 10-30 (LTIWPLLLLAIAAEVAATSLL), 42-62 (TVAVACLYTVAFALLAQILKF), 67-87 (IAYALWAGLGTASVAVIGVLF), and 92-112 (FSWKHAIGLALVVTGVVTLNL).

This sequence belongs to the drug/metabolite transporter (DMT) superfamily. Small multidrug resistance (SMR) (TC 2.A.7.1) family. NepA/NepB subfamily. In terms of assembly, the efflux pump is composed of NepA and NepB.

Its subcellular location is the cell membrane. Component of an efflux pump responsible for the transport of nicotine breakdown products, in particular methylamine, out of the cell. This pump apparently serves as a metabolic valve for nicotine catabolites and may protect the bacteria from the potentially toxic side effects of these compounds. The chain is Nicotine metabolites export pump subunit NepA (nepA) from Paenarthrobacter nicotinovorans (Arthrobacter nicotinovorans).